The primary structure comprises 261 residues: MRAQDHAISSVKAKLQVRRLNFYYGRTQALKNIELSIPERKITAFIGPSGCGKSTLLRTFNKMYTLYPEQRAEGEIWMDGENLLDPKQDIALLRARIGMVFQKPTPFPMSVYDNIAFGMKLFERLSGAEMDARVDGRRHPGPLWNEVKNTLRQSGICLSGGQQQRLCIARAIAIRPEVLLLDEPCSALDPISTGRIEELISELGHEYTVVIVTHNLQQAARCSDYTAYLYLGELVEFGETQQLFMKPAHQETENYITGRFG.

The ABC transporter domain maps to leucine 15–isoleucine 256. Residue glycine 47–serine 54 participates in ATP binding.

The protein belongs to the ABC transporter superfamily. Phosphate importer (TC 3.A.1.7) family. In terms of assembly, the complex is composed of two ATP-binding proteins (PstB), two transmembrane proteins (PstC and PstA) and a solute-binding protein (PstS).

It is found in the cell inner membrane. It carries out the reaction phosphate(out) + ATP + H2O = ADP + 2 phosphate(in) + H(+). In terms of biological role, part of the ABC transporter complex PstSACB involved in phosphate import. Responsible for energy coupling to the transport system. This Burkholderia sp protein is Phosphate import ATP-binding protein PstB.